The sequence spans 138 residues: Ribulose bisphosphate carboxylase small subunit (138 aa).

Belongs to the RuBisCO small chain family. In terms of assembly, heterohexadecamer of 8 large and 8 small subunits.

It is found in the plastid. The protein localises to the chloroplast. In terms of biological role, ruBisCO catalyzes two reactions: the carboxylation of D-ribulose 1,5-bisphosphate, the primary event in carbon dioxide fixation, as well as the oxidative fragmentation of the pentose substrate in the photorespiration process. Both reactions occur simultaneously and in competition at the same active site. Although the small subunit is not catalytic it is essential for maximal activity. Carbon dioxide and oxygen bind in the same pocket of the enzyme in a similar manner. This is Ribulose bisphosphate carboxylase small subunit from Galdieria sulphuraria (Red alga).